We begin with the raw amino-acid sequence, 327 residues long: Biotin synthase (327 aa).

Positions 42-268 constitute a Radical SAM core domain; sequence NKVQKASLLS…VMPASTVRLS (227 aa). Residues Cys57, Cys61, and Cys64 each contribute to the [4Fe-4S] cluster site. Positions 102, 134, 194, and 266 each coordinate [2Fe-2S] cluster.

It belongs to the radical SAM superfamily. Biotin synthase family. As to quaternary structure, homodimer. [4Fe-4S] cluster is required as a cofactor. The cofactor is [2Fe-2S] cluster.

The catalysed reaction is (4R,5S)-dethiobiotin + (sulfur carrier)-SH + 2 reduced [2Fe-2S]-[ferredoxin] + 2 S-adenosyl-L-methionine = (sulfur carrier)-H + biotin + 2 5'-deoxyadenosine + 2 L-methionine + 2 oxidized [2Fe-2S]-[ferredoxin]. Its pathway is cofactor biosynthesis; biotin biosynthesis; biotin from 7,8-diaminononanoate: step 2/2. Catalyzes the conversion of dethiobiotin (DTB) to biotin by the insertion of a sulfur atom into dethiobiotin via a radical-based mechanism. The sequence is that of Biotin synthase from Rhizobium rhizogenes (strain K84 / ATCC BAA-868) (Agrobacterium radiobacter).